The following is a 140-amino-acid chain: Large ribosomal subunit protein uL16 (140 aa).

Residues 1-14 show a composition bias toward basic residues; it reads MLMPKKVKHRKQMK. Residues 1-20 are disordered; the sequence is MLMPKKVKHRKQMKGRMSGT.

It belongs to the universal ribosomal protein uL16 family. In terms of assembly, part of the 50S ribosomal subunit.

Functionally, binds 23S rRNA and is also seen to make contacts with the A and possibly P site tRNAs. The chain is Large ribosomal subunit protein uL16 from Geotalea daltonii (strain DSM 22248 / JCM 15807 / FRC-32) (Geobacter daltonii).